The sequence spans 293 residues: Homoserine kinase (293 aa).

Position 83–93 (83–93) interacts with ATP; that stretch reads PITRGMGSSSA.

This sequence belongs to the GHMP kinase family. Homoserine kinase subfamily.

It localises to the cytoplasm. The enzyme catalyses L-homoserine + ATP = O-phospho-L-homoserine + ADP + H(+). Its pathway is amino-acid biosynthesis; L-threonine biosynthesis; L-threonine from L-aspartate: step 4/5. Catalyzes the ATP-dependent phosphorylation of L-homoserine to L-homoserine phosphate. The chain is Homoserine kinase from Helicobacter pylori (strain ATCC 700392 / 26695) (Campylobacter pylori).